The following is a 356-amino-acid chain: Torsin-like protein (356 aa).

Residues 1–18 (MKLDYVLLLLFHLCFVNT) form the signal peptide. 110–117 (GYTGSGKN) is a binding site for ATP. Residues N125 and N250 are each glycosylated (N-linked (GlcNAc...) asparagine).

Belongs to the ClpA/ClpB family. Torsin subfamily.

Its subcellular location is the endoplasmic reticulum lumen. Its function is as follows. May serve as a molecular chaperone assisting in the proper folding of secreted and/or membrane proteins. In Caenorhabditis elegans, this protein is Torsin-like protein (ooc-5).